A 178-amino-acid polypeptide reads, in one-letter code: Large ribosomal subunit protein uL6 (178 aa).

This sequence belongs to the universal ribosomal protein uL6 family. As to quaternary structure, part of the 50S ribosomal subunit.

Functionally, this protein binds to the 23S rRNA, and is important in its secondary structure. It is located near the subunit interface in the base of the L7/L12 stalk, and near the tRNA binding site of the peptidyltransferase center. This is Large ribosomal subunit protein uL6 from Campylobacter curvus (strain 525.92).